The following is a 522-amino-acid chain: MNHAKVNQHPGQATLPETAEGQVRTYEVKTYGCQMNVHDSERLSGLLEEAGYVAAPEDTTPDLVVFNTCAVRENADMRLYGTLGNLRSVKEKNPGMQIAVGGCLAQKDKDTVVKKAPWVDVVFGTHNIGSLPTLLQRAEHNAQAEVEIVDSLEQFPSVLSAKRESAYAGWVSVSVGCNNTCTFCIVPSLRGKEQDRRPGDILAEVQALVDQGVTEVTLLGQNVNAYGVNFVDPELERDRSAFSKLLRACGEIEGLERVRFTSPHPAEFTSDVIDAMAETPNICPQLHMPLQSGSDKVLKEMRRSYRSKKFLSILDEVRAKIPHASITTDIIVGFPGETEEDFQATLDVVKKARFTSAYTFQYSPRPGTPAAEYENQLPKEVVQERYERLMVVQEQVCEEENQKLIGTTVELLVQAGGGRKNDATKRMSGRARDGRLVHFAPEGDIDGEIRPGDFVTVTVTEAKPFFLIADSGVQTHRRTKAGDNSAVGQVPTTAPIGVGLGLPQIGAPKVAPATESACCSIN.

Positions 24-140 (RTYEVKTYGC…LPTLLQRAEH (117 aa)) constitute an MTTase N-terminal domain. [4Fe-4S] cluster-binding residues include C33, C69, C103, C177, C181, and C184. Residues 163–399 (RESAYAGWVS…MVVQEQVCEE (237 aa)) enclose the Radical SAM core domain. Residues 402–473 (QKLIGTTVEL…PFFLIADSGV (72 aa)) enclose the TRAM domain.

It belongs to the methylthiotransferase family. MiaB subfamily. As to quaternary structure, monomer. The cofactor is [4Fe-4S] cluster.

It is found in the cytoplasm. The catalysed reaction is N(6)-dimethylallyladenosine(37) in tRNA + (sulfur carrier)-SH + AH2 + 2 S-adenosyl-L-methionine = 2-methylsulfanyl-N(6)-dimethylallyladenosine(37) in tRNA + (sulfur carrier)-H + 5'-deoxyadenosine + L-methionine + A + S-adenosyl-L-homocysteine + 2 H(+). Its function is as follows. Catalyzes the methylthiolation of N6-(dimethylallyl)adenosine (i(6)A), leading to the formation of 2-methylthio-N6-(dimethylallyl)adenosine (ms(2)i(6)A) at position 37 in tRNAs that read codons beginning with uridine. The protein is tRNA-2-methylthio-N(6)-dimethylallyladenosine synthase of Corynebacterium glutamicum (strain ATCC 13032 / DSM 20300 / JCM 1318 / BCRC 11384 / CCUG 27702 / LMG 3730 / NBRC 12168 / NCIMB 10025 / NRRL B-2784 / 534).